Consider the following 183-residue polypeptide: Integrase-like protein y4lS (183 aa).

In terms of domain architecture, Resolvase/invertase-type recombinase catalytic spans 2–136; the sequence is ARIGYARTFT…EGIAAARKRG (135 aa).

This sequence belongs to the site-specific recombinase resolvase family.

The chain is Integrase-like protein y4lS from Sinorhizobium fredii (strain NBRC 101917 / NGR234).